The chain runs to 472 residues: NALCN channel auxiliary factor 2 (472 aa).

Residues 47-67 traverse the membrane as a helical segment; that stretch reads LASLLFFTVLLADHLWLCAGA. A disordered region spans residues 77-114; sequence AMRPPWGAGRERQPVPPRAVLPLPPPPPGEPSAPPGTC. Pro residues predominate over residues 90-110; the sequence is PVPPRAVLPLPPPPPGEPSAP. Asparagine 120 and asparagine 193 each carry an N-linked (GlcNAc...) asparagine glycan. The helical transmembrane segment at 433–453 threads the bilayer; the sequence is LCVLVLMLLHTVVSFSSNQGG.

This sequence belongs to the NALF family.

The protein resides in the membrane. In terms of biological role, probable component of the NALCN channel complex, a channel that regulates the resting membrane potential and controls neuronal excitability. The protein is NALCN channel auxiliary factor 2 of Homo sapiens (Human).